Consider the following 44-residue polypeptide: Thymosin beta-4 (44 aa).

Positions 1 to 25 (MSDKPDMAEIEKFDKSKLKKTETQE) are enriched in basic and acidic residues. The interval 1–44 (MSDKPDMAEIEKFDKSKLKKTETQEKNPLPSKETIEQEKQAGES) is disordered. Ser2 bears the N-acetylserine mark. Ser2 is modified (phosphoserine). An N6-acetyllysine modification is found at Lys4. At Lys12 the chain carries N6-acetyllysine; alternate. Lys12 is covalently cross-linked (Glycyl lysine isopeptide (Lys-Gly) (interchain with G-Cter in SUMO2); alternate). Thr23 is modified (phosphothreonine). Lys26 is modified (N6-acetyllysine). Ser31 is subject to Phosphoserine. Lys32 carries the N6-acetyllysine modification. A compositionally biased stretch (basic and acidic residues) spans 33 to 44 (ETIEQEKQAGES). Thr34 carries the post-translational modification Phosphothreonine. Position 39 is an N6-acetyllysine (Lys39).

It belongs to the thymosin beta family. As to quaternary structure, identified in a complex composed of ACTA1, COBL, GSN AND TMSB4X. Interacts with SERPINB1. Post-translationally, acSDKP is inactivated by ACE, which removes the dipeptide Lys-Pro from its C-terminus.

The protein localises to the cytoplasm. It localises to the cytoskeleton. Its function is as follows. Plays an important role in the organization of the cytoskeleton. Binds to and sequesters actin monomers (G actin) and therefore inhibits actin polymerization. Functionally, potent inhibitor of bone marrow derived stem cell differentiation. Acts by inhibits the entry of hematopoietic pluripotent stem cells into the S-phase. In Bos taurus (Bovine), this protein is Thymosin beta-4 (TMSB4).